Consider the following 214-residue polypeptide: A-type ATP synthase subunit D (214 aa).

It belongs to the V-ATPase D subunit family. In terms of assembly, has multiple subunits with at least A(3), B(3), C, D, E, F, H, I and proteolipid K(x).

The protein resides in the cell membrane. In terms of biological role, component of the A-type ATP synthase that produces ATP from ADP in the presence of a proton gradient across the membrane. The protein is A-type ATP synthase subunit D of Thermococcus sibiricus (strain DSM 12597 / MM 739).